The chain runs to 342 residues: Holliday junction branch migration complex subunit RuvB (342 aa).

A large ATPase domain (RuvB-L) region spans residues 1–185; it reads MTVKPLRDVT…FPIQERLEYY (185 aa). Residues Leu24, Arg25, Gly66, Lys69, Thr70, Ser71, 132–134, Arg175, Tyr185, and Arg222 contribute to the ATP site; that span reads EDY. A Mg(2+)-binding site is contributed by Thr70. The small ATPAse domain (RuvB-S) stretch occupies residues 186 to 256; sequence GPAELKEIAV…VVDRTLRRLE (71 aa). The interval 259 to 342 is head domain (RuvB-H); that stretch reads ARGLDAMDRR…RSGGKQGSLV (84 aa). DNA contacts are provided by Arg314 and Arg319.

It belongs to the RuvB family. In terms of assembly, homohexamer. Forms an RuvA(8)-RuvB(12)-Holliday junction (HJ) complex. HJ DNA is sandwiched between 2 RuvA tetramers; dsDNA enters through RuvA and exits via RuvB. An RuvB hexamer assembles on each DNA strand where it exits the tetramer. Each RuvB hexamer is contacted by two RuvA subunits (via domain III) on 2 adjacent RuvB subunits; this complex drives branch migration. In the full resolvosome a probable DNA-RuvA(4)-RuvB(12)-RuvC(2) complex forms which resolves the HJ.

It is found in the cytoplasm. It catalyses the reaction ATP + H2O = ADP + phosphate + H(+). In terms of biological role, the RuvA-RuvB-RuvC complex processes Holliday junction (HJ) DNA during genetic recombination and DNA repair, while the RuvA-RuvB complex plays an important role in the rescue of blocked DNA replication forks via replication fork reversal (RFR). RuvA specifically binds to HJ cruciform DNA, conferring on it an open structure. The RuvB hexamer acts as an ATP-dependent pump, pulling dsDNA into and through the RuvAB complex. RuvB forms 2 homohexamers on either side of HJ DNA bound by 1 or 2 RuvA tetramers; 4 subunits per hexamer contact DNA at a time. Coordinated motions by a converter formed by DNA-disengaged RuvB subunits stimulates ATP hydrolysis and nucleotide exchange. Immobilization of the converter enables RuvB to convert the ATP-contained energy into a lever motion, pulling 2 nucleotides of DNA out of the RuvA tetramer per ATP hydrolyzed, thus driving DNA branch migration. The RuvB motors rotate together with the DNA substrate, which together with the progressing nucleotide cycle form the mechanistic basis for DNA recombination by continuous HJ branch migration. Branch migration allows RuvC to scan DNA until it finds its consensus sequence, where it cleaves and resolves cruciform DNA. The polypeptide is Holliday junction branch migration complex subunit RuvB (Anaeromyxobacter dehalogenans (strain 2CP-C)).